The chain runs to 601 residues: Elongation factor 4 (601 aa).

The region spanning 6-188 (KNIRNFSIIA…QIIKKIPAPD (183 aa)) is the tr-type G domain. GTP is bound by residues 18–23 (DHGKST) and 135–138 (NKID).

This sequence belongs to the TRAFAC class translation factor GTPase superfamily. Classic translation factor GTPase family. LepA subfamily.

The protein resides in the cell membrane. The catalysed reaction is GTP + H2O = GDP + phosphate + H(+). Required for accurate and efficient protein synthesis under certain stress conditions. May act as a fidelity factor of the translation reaction, by catalyzing a one-codon backward translocation of tRNAs on improperly translocated ribosomes. Back-translocation proceeds from a post-translocation (POST) complex to a pre-translocation (PRE) complex, thus giving elongation factor G a second chance to translocate the tRNAs correctly. Binds to ribosomes in a GTP-dependent manner. The sequence is that of Elongation factor 4 from Buchnera aphidicola subsp. Schizaphis graminum (strain Sg).